We begin with the raw amino-acid sequence, 128 residues long: Nanos homolog 1 (128 aa).

The tract at residues phenylalanine 7–glycine 23 is essential for its translational repressor activity. The tract at residues glycine 23–histidine 58 is disordered. The segment at glycine 60–leucine 114 adopts a Nanos-type zinc-finger fold. Zn(2+)-binding residues include cysteine 61, cysteine 64, histidine 77, cysteine 88, cysteine 96, cysteine 99, histidine 107, and cysteine 112. 2 consecutive short sequence motifs (C2HC) follow at residues cysteine 61–cysteine 88 and cysteine 96–cysteine 112.

Belongs to the nanos family. In terms of assembly, interacts with ccnb1.

It is found in the cytoplasm. The protein resides in the perinuclear region. Its function is as follows. Acts as a translational repressor. Can mediate repression affecting different steps in the translation process: cap-driven, IRES-driven, polyadenylated RNAs or nonpolyadenylated RNAs. Essential for the development of primordial germ cells (PGCs) by ensuring their proper migration and survival. The protein is Nanos homolog 1 (nanos1) of Xenopus tropicalis (Western clawed frog).